The chain runs to 477 residues: UDP-N-acetylmuramate--L-alanine ligase (477 aa).

122-128 is a binding site for ATP; it reads GTHGKTT.

It belongs to the MurCDEF family.

Its subcellular location is the cytoplasm. The enzyme catalyses UDP-N-acetyl-alpha-D-muramate + L-alanine + ATP = UDP-N-acetyl-alpha-D-muramoyl-L-alanine + ADP + phosphate + H(+). It participates in cell wall biogenesis; peptidoglycan biosynthesis. Its function is as follows. Cell wall formation. In Xanthomonas euvesicatoria pv. vesicatoria (strain 85-10) (Xanthomonas campestris pv. vesicatoria), this protein is UDP-N-acetylmuramate--L-alanine ligase.